The primary structure comprises 254 residues: Phosphoglycerate mutase 1 (254 aa).

Substrate-binding positions include 10-17 and 23-24; these read RHGESAWN and SG. Residue His11 is the Tele-phosphohistidine intermediate of the active site. 2 positions are modified to phosphoserine: Ser14 and Ser23. Position 26 is a phosphotyrosine (Tyr26). Ser31 carries the phosphoserine modification. Residues Arg62, 89 to 92, and Lys100 each bind substrate; that span reads ERHY. Catalysis depends on Glu89, which acts as the Proton donor/acceptor. At Lys106 the chain carries N6-acetyllysine. Substrate is bound at residue 116–117; sequence RR. A Phosphoserine modification is found at Ser118. 187 to 188 provides a ligand contact to substrate; that stretch reads GN. Lys251 is modified (N6-acetyllysine; alternate). At Lys251 the chain carries N6-succinyllysine; alternate. Lys253 and Lys254 each carry N6-acetyllysine.

Belongs to the phosphoglycerate mutase family. BPG-dependent PGAM subfamily. Homodimer. Acetylated at Lys-253, Lys-253 and Lys-254 under high glucose condition. Acetylation increases catalytic activity. Under glucose restriction SIRT1 levels dramatically increase and it deacetylates the enzyme.

The enzyme catalyses (2R)-2-phosphoglycerate = (2R)-3-phosphoglycerate. It catalyses the reaction (2R)-3-phospho-glyceroyl phosphate = (2R)-2,3-bisphosphoglycerate + H(+). Functionally, catalyzes the interconversion of 2-phosphoglycerate and 3-phosphoglyceratea crucial step in glycolysis, by using 2,3-bisphosphoglycerate. Also catalyzes the interconversion of (2R)-2,3-bisphosphoglycerate and (2R)-3-phospho-glyceroyl phosphate. This chain is Phosphoglycerate mutase 1, found in Pongo abelii (Sumatran orangutan).